The chain runs to 149 residues: Large ribosomal subunit protein uL13 (149 aa).

It belongs to the universal ribosomal protein uL13 family. Part of the 50S ribosomal subunit.

Functionally, this protein is one of the early assembly proteins of the 50S ribosomal subunit, although it is not seen to bind rRNA by itself. It is important during the early stages of 50S assembly. This Borrelia recurrentis (strain A1) protein is Large ribosomal subunit protein uL13.